Reading from the N-terminus, the 1192-residue chain is ATP-dependent helicase/deoxyribonuclease subunit B (1192 aa).

It belongs to the helicase family. AddB/RexB type 2 subfamily. As to quaternary structure, heterodimer of AddA and RexB. It depends on Mg(2+) as a cofactor.

The heterodimer acts as both an ATP-dependent DNA helicase and an ATP-dependent, dual-direction single-stranded exonuclease. Recognizes the chi site generating a DNA molecule suitable for the initiation of homologous recombination. This subunit has 5' -&gt; 3' nuclease activity but not helicase activity. The polypeptide is ATP-dependent helicase/deoxyribonuclease subunit B (Pediococcus pentosaceus (strain ATCC 25745 / CCUG 21536 / LMG 10740 / 183-1w)).